The primary structure comprises 874 residues: Probable inorganic carbon transporter subunit DabA (874 aa).

The Zn(2+) site is built by cysteine 398, aspartate 400, histidine 580, and cysteine 595.

It belongs to the inorganic carbon transporter (TC 9.A.2) DabA family. Forms a complex with DabB. The cofactor is Zn(2+).

It localises to the cell membrane. Its function is as follows. Part of an energy-coupled inorganic carbon pump. The chain is Probable inorganic carbon transporter subunit DabA from Bacillus anthracis (strain A0248).